The primary structure comprises 503 residues: MQTTLGPRVRTRFAPSPTGYLHVGGLRTALYNYLYAKKVGGDFIVRIEDTDQARKVEGADQSLLKTLEESGIVADESILHGGNFGPYMQSERLDTYAQYCRQLLDQNNAYYCFSTAEELDENRKLQMKQGIQPKYNRKWLPETMGGNMPQSEIQKKLDEGAPYVIRMKVPDYISIMFEDIVRGPVEFDSATVDDQVLMKSDGFPTYHFASVIDDHLMEITHIIRGEEWLSSMPKHLLLYEFFGWEAPRFAHLPLLLNPDRSKLSKRQGDVAVEDFIAKGYSPDAILNFVALLGWNEGEGSEQEIYSLEELVQKFSLERVGKAGAVFNIDKLDWIEKQYIKARPVDQIIQAIKPLLQKELAEKSTDMDVARISSDEYLTQVIDLMRERVNFENEFITFSNYFYFDPETYDEAAVAKRWQDDTNEVLAEFITELEESDDFSADNIEAMLKAFVAPKGKKPAFLIHPLRILSSGVGFGPSLYHMLEVLGKQTVIRRLKKGIERVTV.

Positions 15–25 match the 'HIGH' region motif; that stretch reads PSPTGYLHVGG. The 'KMSKS' region signature appears at 262–266; sequence KLSKR. ATP is bound at residue lysine 265.

Belongs to the class-I aminoacyl-tRNA synthetase family. Glutamate--tRNA ligase type 1 subfamily. As to quaternary structure, monomer.

It is found in the cytoplasm. The catalysed reaction is tRNA(Glu) + L-glutamate + ATP = L-glutamyl-tRNA(Glu) + AMP + diphosphate. Catalyzes the attachment of glutamate to tRNA(Glu) in a two-step reaction: glutamate is first activated by ATP to form Glu-AMP and then transferred to the acceptor end of tRNA(Glu). This is Glutamate--tRNA ligase from Prosthecochloris aestuarii (strain DSM 271 / SK 413).